The primary structure comprises 335 residues: Holliday junction branch migration complex subunit RuvB (335 aa).

The segment at 2–184 is large ATPase domain (RuvB-L); sequence ADERIVSAEN…FGIVEHMAYY (183 aa). ATP contacts are provided by residues Leu23, Arg24, Gly65, Lys68, Thr69, Thr70, 131–133, Arg174, Tyr184, and Arg221; that span reads EDF. Thr69 lines the Mg(2+) pocket. The small ATPAse domain (RuvB-S) stretch occupies residues 185-255; it reads TEADLMDIVQ…IADHALSQLQ (71 aa). A head domain (RuvB-H) region spans residues 258–335; the sequence is IRGLDGVDRK…AHLGMPYPEK (78 aa). Residues Arg313 and Arg318 each contribute to the DNA site.

Belongs to the RuvB family. As to quaternary structure, homohexamer. Forms an RuvA(8)-RuvB(12)-Holliday junction (HJ) complex. HJ DNA is sandwiched between 2 RuvA tetramers; dsDNA enters through RuvA and exits via RuvB. An RuvB hexamer assembles on each DNA strand where it exits the tetramer. Each RuvB hexamer is contacted by two RuvA subunits (via domain III) on 2 adjacent RuvB subunits; this complex drives branch migration. In the full resolvosome a probable DNA-RuvA(4)-RuvB(12)-RuvC(2) complex forms which resolves the HJ.

The protein localises to the cytoplasm. The enzyme catalyses ATP + H2O = ADP + phosphate + H(+). Its function is as follows. The RuvA-RuvB-RuvC complex processes Holliday junction (HJ) DNA during genetic recombination and DNA repair, while the RuvA-RuvB complex plays an important role in the rescue of blocked DNA replication forks via replication fork reversal (RFR). RuvA specifically binds to HJ cruciform DNA, conferring on it an open structure. The RuvB hexamer acts as an ATP-dependent pump, pulling dsDNA into and through the RuvAB complex. RuvB forms 2 homohexamers on either side of HJ DNA bound by 1 or 2 RuvA tetramers; 4 subunits per hexamer contact DNA at a time. Coordinated motions by a converter formed by DNA-disengaged RuvB subunits stimulates ATP hydrolysis and nucleotide exchange. Immobilization of the converter enables RuvB to convert the ATP-contained energy into a lever motion, pulling 2 nucleotides of DNA out of the RuvA tetramer per ATP hydrolyzed, thus driving DNA branch migration. The RuvB motors rotate together with the DNA substrate, which together with the progressing nucleotide cycle form the mechanistic basis for DNA recombination by continuous HJ branch migration. Branch migration allows RuvC to scan DNA until it finds its consensus sequence, where it cleaves and resolves cruciform DNA. The chain is Holliday junction branch migration complex subunit RuvB from Latilactobacillus sakei subsp. sakei (strain 23K) (Lactobacillus sakei subsp. sakei).